The chain runs to 1123 residues: MTKSTKLRHCKQKKKKPEKTPKGNPPILITEKSIEDAATTTSTTDALLGSPEGSRSKSRKLKLCCCTAQAATLSPLDPTSYGGIASTSAHNGMVGGLSRDSRAASRTSKRGSSKSLNRPQIDADEPSTSGTNPDRRPSTHFVLDLPVVSTRLRKLSEAFFNAQHGDKIDLMNDWEIGGTQNKWVCPSDRHLHLRAQLKSGWSVRTATARSPTNSKAQTGSITAAEQEHIQKVLAKAEESKSKEQQRIGKMVDRLEKMRRRATGNGVTHCLLCHTEFGLLASKSYAAMCVDCRKYVCQRNCGVETTDVNQTTGKVETVFLCKICSEAREVLWKKSGAWFYKEMPEFQRPDDRLPYYVPVTTNGTLPNASSAATPLSGTPGGAGPQPMTMPSTSSCQMTTPKWASPGVCNSPGLQMNGGPTSPLPNGTRRNTGHGGIEFPSSSRPSICSVLQAIEPLDRSKSPRPRIQPRWVNEKVMSSMSVDDEEKAASSSDGESFVQSGVPRRALNNKTPVGSTSATTSPAPPPTSTTPTSRREANMERFSRHTHAHANRLYSTDDDDDSSPESRPSTRSTSPRHSLATPSSYAHDTCHDTSLPDADTRSIDSGVVQSDHSNPQQSGLTCSSSSLTPLQQQASHDHHSGGGTPRRISNPDRTTSRVAQSASGTSLVTPPPPISSRTSPDNCNSSPLNVMEHKSSSASTASSGGNRRVGSAEPVLNNHHAMHNNQNHNDINKKLISQTSRAESPLAASSSFLSSPDDDTKQKNRRRDGVGRVNSLQLRTSLDDVAPPVAPISKMNGHIVSSEPTSSTTSNQNHTSVPIPTVPVVPEEEEEKAITASTESASEPGSLGSITLTLTYHSADKKLKMHLIRAKNLKAMDSNGFSDPYVKFHLLPGNTKATKLTSKTIEKTLNPEWNEEMSYYGITEDDKEKKILRVTVLDRDRIGSDFLGETRIALKKLNDNEMKKFNLYLESALPVPQQTKEEENEDRGKINVGLQYNIQQGSLFININRCVELVGMDSTGFSDPYCKVSLTPITSKAHRAKTSTKKRTLNPEWNEQLQFVVPFKDLPKKTLQIGVYDHDLGKHDDYIGGILLSTSAKDERGRQWIKCIENPGTLVEAWHRLELDS.

The span at 1-17 shows a compositional bias: basic residues; sequence MTKSTKLRHCKQKKKKP. Disordered stretches follow at residues 1–56 and 88–140; these read MTKS…GSRS and SAHN…PSTH. Low complexity predominate over residues 36–46; sequence DAATTTSTTDA. In terms of domain architecture, RabBD spans 215–341; sequence KAQTGSITAA…KKSGAWFYKE (127 aa). The segment at 263 to 328 adopts an FYVE-type zinc-finger fold; it reads GNGVTHCLLC…LCKICSEARE (66 aa). Zn(2+)-binding residues include C269, C272, C288, C291, C296, C300, C320, and C323. Polar residues-rich tracts occupy residues 365-375, 387-400, 410-428, and 487-497; these read PNASSAATPLS, TMPS…TTPK, PGLQ…GTRR, and ASSSDGESFVQ. 3 disordered regions span residues 365-710, 737-779, and 796-818; these read PNAS…VGSA, TSRA…LRTS, and HIVS…VPIP. Over residues 531-541 the composition is skewed to basic and acidic residues; it reads SRREANMERFS. Low complexity predominate over residues 563–574; that stretch reads ESRPSTRSTSPR. 2 stretches are compositionally biased toward polar residues: residues 605–632 and 649–666; these read VVQS…QQQA and PDRT…TSLV. The span at 742–753 shows a compositional bias: low complexity; sequence SPLAASSSFLSS. The span at 756–768 shows a compositional bias: basic and acidic residues; that stretch reads DDTKQKNRRRDGV. The segment covering 803–818 has biased composition (low complexity); sequence TSSTTSNQNHTSVPIP. C2 domains follow at residues 844–967 and 984–1103; these read SLGS…NLYL and DRGK…RQWI. Positions 875, 881, 936, 938, 943, 1015, 1021, 1075, 1077, and 1083 each coordinate Ca(2+).

It depends on Ca(2+) as a cofactor.

Its subcellular location is the synapse. In terms of biological role, rab-3 effector. This chain is Rabphilin-1 (rbf-1), found in Caenorhabditis elegans.